The following is a 238-amino-acid chain: Ankyrin repeat domain-containing protein 49 (238 aa).

Serine 48 is subject to Phosphoserine. ANK repeat units lie at residues 77 to 105 (LLWAAEKNRLTTVQRLLSERATHVNTRDE), 106 to 135 (DKYTPLHRAAYNGHLDVVRELIAHGADVHA), 139 to 168 (DGWTPLHSACKWNNARVASFLLQHDADVNA), and 172 to 205 (GLLTPLHLAAGNRDSKDTLELLLMNRYIKPGLKN).

Its subcellular location is the nucleus. In terms of biological role, may have a role in spermatogenesis where it promotes autophagy in response to serum starvation, via the NF-kappaB pathway. This chain is Ankyrin repeat domain-containing protein 49 (ANKRD49), found in Bos taurus (Bovine).